A 380-amino-acid polypeptide reads, in one-letter code: Chaperone protein DnaJ (380 aa).

Positions 5–70 constitute a J domain; the sequence is DFYEVLGVSR…QKRAAYDQYG (66 aa). A CR-type zinc finger spans residues 135–213; it reads GCEKDIEIPT…CHGDGRVQKT (79 aa). Cys148, Cys151, Cys165, Cys168, Cys187, Cys190, Cys201, and Cys204 together coordinate Zn(2+). CXXCXGXG motif repeat units lie at residues 148-155, 165-172, 187-194, and 201-208; these read CEPCDGTG, CSTCHGQG, CPTCHGKG, and CNSCHGDG.

The protein belongs to the DnaJ family. Homodimer. Zn(2+) is required as a cofactor.

It is found in the cytoplasm. Its function is as follows. Participates actively in the response to hyperosmotic and heat shock by preventing the aggregation of stress-denatured proteins and by disaggregating proteins, also in an autonomous, DnaK-independent fashion. Unfolded proteins bind initially to DnaJ; upon interaction with the DnaJ-bound protein, DnaK hydrolyzes its bound ATP, resulting in the formation of a stable complex. GrpE releases ADP from DnaK; ATP binding to DnaK triggers the release of the substrate protein, thus completing the reaction cycle. Several rounds of ATP-dependent interactions between DnaJ, DnaK and GrpE are required for fully efficient folding. Also involved, together with DnaK and GrpE, in the DNA replication of plasmids through activation of initiation proteins. The chain is Chaperone protein DnaJ from Aliivibrio salmonicida (strain LFI1238) (Vibrio salmonicida (strain LFI1238)).